Reading from the N-terminus, the 293-residue chain is 4-diphosphocytidyl-2-C-methyl-D-erythritol kinase (293 aa).

The active site involves Lys-16. ATP is bound at residue 99-109 (PMGAGLGGGSS). Residue Asp-141 is part of the active site.

It belongs to the GHMP kinase family. IspE subfamily.

It carries out the reaction 4-CDP-2-C-methyl-D-erythritol + ATP = 4-CDP-2-C-methyl-D-erythritol 2-phosphate + ADP + H(+). It functions in the pathway isoprenoid biosynthesis; isopentenyl diphosphate biosynthesis via DXP pathway; isopentenyl diphosphate from 1-deoxy-D-xylulose 5-phosphate: step 3/6. Its function is as follows. Catalyzes the phosphorylation of the position 2 hydroxy group of 4-diphosphocytidyl-2C-methyl-D-erythritol. In Burkholderia lata (strain ATCC 17760 / DSM 23089 / LMG 22485 / NCIMB 9086 / R18194 / 383), this protein is 4-diphosphocytidyl-2-C-methyl-D-erythritol kinase.